The primary structure comprises 193 residues: uncharacterized protein (193 aa).

This is an uncharacterized protein from Bacillus subtilis (strain 168).